The sequence spans 752 residues: Exocyst complex component EXO84B (752 aa).

Disordered regions lie at residues 511 to 532 and 724 to 752; these read QTGQ…NPEQ and TKGN…HGSY. Over residues 515 to 532 the composition is skewed to basic and acidic residues; sequence RTDDLRRPLDRQNRNPEQ. The span at 733–752 shows a compositional bias: low complexity; that stretch reads SPTASVSAQSVSSARSHGSY.

This sequence belongs to the EXO84 family. As to quaternary structure, the exocyst complex is composed of SEC3, SEC5, SEC6, SEC8, SEC10, EXO70A1 and EXO84B. Interacts with SEC6, SEC10, SEC15B and EXO70A1. Interacts with EXO70B1. Binds directly to B1L.

Its subcellular location is the cytoplasm. The protein resides in the cytosol. It is found in the perinuclear region. The protein localises to the cytoskeleton. It localises to the phragmoplast. Its subcellular location is the secreted. The protein resides in the cell wall. It is found in the cell membrane. Its function is as follows. Component of the exocyst complex involved in the docking of exocytic vesicles with fusion sites on the plasma membrane during regulated or polarized secretion. Involved in polarized cell growth and organ morphogenesis. During cytokinesis, involved in cell plate initiation, cell plate maturation and formation of new primary cell wall. Probable component of an exocyst subcomplex specifically involved in autophagy-related, Golgi-independent membrane traffic to the vacuole. Regulates autophagosome formation and autophagy-related Golgi-independent import into the vacuole. Mediates ABCG36/PEN3 outer-membrane polarity at the periphery of lateral root cap and root epidermal cells. The chain is Exocyst complex component EXO84B from Arabidopsis thaliana (Mouse-ear cress).